The following is a 228-amino-acid chain: Putative adhesin RBE_1271 (228 aa).

A signal peptide spans 1–22 (MKKLLLIAATSATVLSSALSFA).

The protein is Putative adhesin RBE_1271 of Rickettsia bellii (strain RML369-C).